A 76-amino-acid polypeptide reads, in one-letter code: Putative defensin-like protein 62 (76 aa).

A signal peptide spans 1 to 26 (MDVTKTYVTIFVVAILTISVLIQIQQ). 4 disulfide bridges follow: Cys-30/Cys-71, Cys-34/Cys-57, Cys-43/Cys-69, and Cys-47/Cys-70.

This sequence belongs to the DEFL family.

Its subcellular location is the secreted. In Arabidopsis thaliana (Mouse-ear cress), this protein is Putative defensin-like protein 62.